The primary structure comprises 128 residues: Large ribosomal subunit protein bL17 (128 aa).

This sequence belongs to the bacterial ribosomal protein bL17 family. Part of the 50S ribosomal subunit. Contacts protein L32.

The chain is Large ribosomal subunit protein bL17 from Streptococcus pneumoniae serotype 2 (strain D39 / NCTC 7466).